Consider the following 332-residue polypeptide: 2,3-diketo-L-gulonate reductase (332 aa).

Catalysis depends on His44, which acts as the Proton donor. Residues 168 to 174 (ITMVDMS), 224 to 225 (WK), and 304 to 306 (GHE) contribute to the NAD(+) site.

Belongs to the LDH2/MDH2 oxidoreductase family. DlgD subfamily. As to quaternary structure, homodimer.

It localises to the cytoplasm. The catalysed reaction is 3-dehydro-L-gulonate + NAD(+) = 2,3-dioxo-L-gulonate + NADH + H(+). The enzyme catalyses 3-dehydro-L-gulonate + NADP(+) = 2,3-dioxo-L-gulonate + NADPH + H(+). Functionally, catalyzes the reduction of 2,3-diketo-L-gulonate in the presence of NADH, to form 3-keto-L-gulonate. The polypeptide is 2,3-diketo-L-gulonate reductase (Haemophilus influenzae (strain ATCC 51907 / DSM 11121 / KW20 / Rd)).